Consider the following 399-residue polypeptide: Brefeldin A resistance protein (399 aa).

3 stretches are compositionally biased toward basic and acidic residues: residues 1–31 (MTSKMENNKDESISTKNALEEKSNETKDETS), 49–69 (SKSEPLEDKGNAEVKEFKETT), and 101–130 (KVEEKELKVNKDVDENEGHVAVETGKKESA). Disordered stretches follow at residues 1 to 173 (MTSK…FGAF) and 191 to 269 (KKFA…SEII). Over residues 138–157 (SPFSQFASFSNASSPFSNVS) the composition is skewed to low complexity. Composition is skewed to basic and acidic residues over residues 205–217 (SGKEKENDKKSSE) and 241–252 (TKSEPKEADKGS). Residues 253-263 (GDSTKSTMHQL) show a composition bias toward polar residues. The region spanning 256–396 (TKSTMHQLSD…VLEAIPKGGR (141 aa)) is the RanBD1 domain.

In terms of processing, phosphorylated.

The protein localises to the nucleus. The polypeptide is Brefeldin A resistance protein (hba1) (Schizosaccharomyces pombe (strain 972 / ATCC 24843) (Fission yeast)).